The chain runs to 103 residues: MKNPLLRPWLTEKSTGLTEKKGQYVFKVKLDADKTDIKKAIEEKFGVVVKSVRTVNCLGKSKRQFTRKGVLQGKKSDWKKAIVTLAKDQSIDYYSGSTQKGEG.

Belongs to the universal ribosomal protein uL23 family. As to quaternary structure, part of the 50S ribosomal subunit. Contacts protein L29, and trigger factor when it is bound to the ribosome.

One of the early assembly proteins it binds 23S rRNA. One of the proteins that surrounds the polypeptide exit tunnel on the outside of the ribosome. Forms the main docking site for trigger factor binding to the ribosome. The protein is Large ribosomal subunit protein uL23 of Chlorobium phaeobacteroides (strain DSM 266 / SMG 266 / 2430).